Consider the following 492-residue polypeptide: MRLYDLTAHRLRELLLGREVSAAELCRSVLNRIDEVEGRVKAYVTLDREGALRQAAAVDRELQNGRELPPLAGIPFAIKDNICLRGLPATCSSKILHNWVPPYDATVVEKLKDQQTVILGKTNMDEFAMGSSTEHSAFFTTRNPWDPKRVPGGSSGGSAAAVAAGSAICALGSDTGGSIRQPASFCGVVGMKPTYGLVSRYGLVAFASSLDQIGPLTRDVTDCALVMNAICGHDHRDSTSVPKEVPDFTSFLVDDVKGMRIGLPREYFPAELDDGVRRIVMEAVSVFEERGAYVEETSLPHTEYALPVYYLIAPAEASSNLARYDGVRYGYRAPECEDVLDMFRVSRSRGFGAEVKRRIMLGTYALSAGYYDAYYLKALKVRTLIRRDFEEAFEKFDVLLSPTAPETAFIIGAKTEDPIRMYLSDIFTLAVNLAGLPGMSVPAGFVAGLPVGIQFIGKPFAEGTLLRMGYAFQQSTDHHRQRPPETPGGEIS.

Residues lysine 79 and serine 154 each act as charge relay system in the active site. The active-site Acyl-ester intermediate is the serine 178.

This sequence belongs to the amidase family. GatA subfamily. As to quaternary structure, heterotrimer of A, B and C subunits.

The enzyme catalyses L-glutamyl-tRNA(Gln) + L-glutamine + ATP + H2O = L-glutaminyl-tRNA(Gln) + L-glutamate + ADP + phosphate + H(+). Its function is as follows. Allows the formation of correctly charged Gln-tRNA(Gln) through the transamidation of misacylated Glu-tRNA(Gln) in organisms which lack glutaminyl-tRNA synthetase. The reaction takes place in the presence of glutamine and ATP through an activated gamma-phospho-Glu-tRNA(Gln). The polypeptide is Glutamyl-tRNA(Gln) amidotransferase subunit A (Desulforudis audaxviator (strain MP104C)).